Here is a 991-residue protein sequence, read N- to C-terminus: Adhesion G-protein coupled receptor F3 (991 aa).

The signal sequence occupies residues 1–20 (MSSLALSQLLLAVTLPLLEL). Residues 21–694 (EPTFVPTAQS…ENPTLDLLSQ (674 aa)) are Extracellular-facing. Residues Asn-75, Asn-102, Asn-118, Asn-321, Asn-362, Asn-484, Asn-571, Asn-589, Asn-630, and Asn-660 are each glycosylated (N-linked (GlcNAc...) asparagine). The GAIN-B domain maps to 519 to 684 (HPFSFSSANV…SILMSQHTVP (166 aa)). Cystine bridges form between Cys-635-Cys-666 and Cys-654-Cys-668. Positions 635–684 (CVFWDHRVFQGQGGWSDEGCEVHAANASITQCICQHLTAFSILMSQHTVP) are GPS. The helical transmembrane segment at 695–715 (VGTGASVLALLVCLAIYGLVW) threads the bilayer. Topologically, residues 716–730 (RVVVRNKVAFFRHTT) are cytoplasmic. The helical transmembrane segment at 731–751 (LFNMVICLLVADTCFLGSPFL) threads the bilayer. Residues 752–757 (PSGYHS) lie on the Extracellular side of the membrane. Residues 758–778 (LICLVTAFLCHFFYLATFFWM) form a helical membrane-spanning segment. The Cytoplasmic portion of the chain corresponds to 779 to 799 (LAQALVLAHQLLFVFHQLSKH). A helical membrane pass occupies residues 800–820 (VVLSLMVMLGYLCPLGFAGVT). The Extracellular segment spans residues 821-850 (LGLYLPQRKYLWEGKCFLNGGGVMLYSFSE). The chain crosses the membrane as a helical span at residues 851–871 (PVLAIVGVNGLVLVIAVLKLL). Over 872–892 (RPSLSEGPTVEKRQALVGVLK) the chain is Cytoplasmic. Residues 893–913 (ALLILTPIFGLTWGLGVATLF) traverse the membrane as a helical segment. The Extracellular segment spans residues 914–916 (DGS). The chain crosses the membrane as a helical span at residues 917-937 (IVSHYAFSILNSLQGVFILVF). Over 938 to 991 (GCLTDKKVLEALRKRLRGSRSSNSAISMVTNETYTSEHSKERSEPASYEERMTD) the chain is Cytoplasmic. Residues 964–991 (SMVTNETYTSEHSKERSEPASYEERMTD) form a disordered region. A compositionally biased stretch (basic and acidic residues) spans 972–991 (TSEHSKERSEPASYEERMTD).

The protein belongs to the G-protein coupled receptor 2 family. Adhesion G-protein coupled receptor (ADGR) subfamily. As to quaternary structure, heterodimer of 2 chains generated by proteolytic processing; the large extracellular N-terminal fragment and the membrane-bound C-terminal fragment predominantly remain associated and non-covalently linked. Autoproteolytically processed at the GPS region of the GAIN-B domain; this cleavage modulates receptor activity. Expression is restricted to testis and circumvallate papillae.

It is found in the membrane. Functionally, orphan receptor. The chain is Adhesion G-protein coupled receptor F3 (ADGRF3) from Mus musculus (Mouse).